Consider the following 240-residue polypeptide: Guanine nucleotide exchange factor sopE2 (240 aa).

The GEF catalytic domain stretch occupies residues 78-240 (LTSKTVKDFM…IANKYLQNAS (163 aa)).

Belongs to the GEF (guanine exchange factor) SopE family.

The protein localises to the secreted. In terms of biological role, activator for CDC42 by directly engaging this Rho GTPase and acting as potent guanine nucleotide exchange factor (GEF). This activation results in actin cytoskeleton rearrangements and stimulates membrane ruffling, promoting bacterial entry into non-phagocytic cells. Also activates NF-kB, p38 and ERK kinases, which are known to be involved in the induction of IL-8 expression. Chaperone InvB is required for secretion, translocation and stabilization of intracellular levels of sopE2. This chain is Guanine nucleotide exchange factor sopE2 (sopE2), found in Salmonella typhimurium (strain LT2 / SGSC1412 / ATCC 700720).